The sequence spans 402 residues: Multidrug resistance protein MdtH (402 aa).

Residues 1-12 are Cytoplasmic-facing; the sequence is MSRVSQARNLGK. The chain crosses the membrane as a helical span at residues 13–33; sequence YFLLIDNMLVVLGFFVVFPLI. Residues 34 to 98 are Periplasmic-facing; the sequence is SIRFVDQMGW…GFATMGIAHE (65 aa). Residues 99–116 form a helical membrane-spanning segment; that stretch reads PWLLWFSCLLSGLGGTLF. Topologically, residues 117–138 are cytoplasmic; the sequence is DPPRSALVVKLIRPQQRCRFFS. A helical transmembrane segment spans residues 139–159; that stretch reads LLMMQDSAGAVIGALLGSWLL. Over 160-164 the chain is Periplasmic; that stretch reads QYDFR. Residues 165–185 form a helical membrane-spanning segment; that stretch reads LVCATGAVLFVLCAAFNAWLL. Residues 186–213 lie on the Cytoplasmic side of the membrane; that stretch reads PAWKLSTVRTPVREGMTRVMRDKRFVTY. A helical transmembrane segment spans residues 214-234; sequence VLTLAGYYMLAVQVMLMLPIM. Over 235-243 the chain is Periplasmic; the sequence is VNDVAGAPS. A helical transmembrane segment spans residues 244–264; sequence AVKWMYAIEACLSLTLLYPIA. Over 265–276 the chain is Cytoplasmic; it reads RWSEKHFRLEHR. Residues 277 to 297 traverse the membrane as a helical segment; that stretch reads LMAGLLIMSLSMMPVGMVSGL. At 298-299 the chain is on the periplasmic side; the sequence is QQ. Residues 300 to 320 form a helical membrane-spanning segment; that stretch reads LFTLICLFYIGSIIAEPARET. At 321–339 the chain is on the cytoplasmic side; that stretch reads LSALLADARARGSYMGFSR. The chain crosses the membrane as a helical span at residues 340-360; sequence LGLAIGGAIGYIGGGWLFDLG. At 361–367 the chain is on the periplasmic side; sequence KSAHQPE. Residues 368–388 form a helical membrane-spanning segment; that stretch reads LPWMMLGIIGIFTFLALGWQF. The Cytoplasmic portion of the chain corresponds to 389-402; the sequence is SQKRATRRLLERDA.

This sequence belongs to the major facilitator superfamily. DHA1 family. MdtH (TC 2.A.1.2.21) subfamily.

The protein resides in the cell inner membrane. The protein is Multidrug resistance protein MdtH of Shigella sonnei (strain Ss046).